Consider the following 102-residue polypeptide: Small ribosomal subunit protein uS14 (102 aa).

This sequence belongs to the universal ribosomal protein uS14 family. Part of the 30S ribosomal subunit. Contacts proteins S3 and S10.

In terms of biological role, binds 16S rRNA, required for the assembly of 30S particles and may also be responsible for determining the conformation of the 16S rRNA at the A site. The polypeptide is Small ribosomal subunit protein uS14 (Wolbachia pipientis wMel).